Consider the following 162-residue polypeptide: uncharacterized protein (162 aa).

This is an uncharacterized protein from Acidianus sp. F28 (AFV-2).